The primary structure comprises 330 residues: D-alanine--D-alanine ligase (330 aa).

An ATP-grasp domain is found at 120–326 (KLWYDALGIP…FKTFLQKAVL (207 aa)). 150–205 (AFKQWGGLFVKAACQGSSVGCYKVTSEAELSKAINDAFGYSQQVLVEKAVKPRELE) contacts ATP. Mg(2+) contacts are provided by Asp280, Glu293, and Asn295.

This sequence belongs to the D-alanine--D-alanine ligase family. Mg(2+) serves as cofactor. Mn(2+) is required as a cofactor.

The protein localises to the cytoplasm. The enzyme catalyses 2 D-alanine + ATP = D-alanyl-D-alanine + ADP + phosphate + H(+). It participates in cell wall biogenesis; peptidoglycan biosynthesis. Functionally, cell wall formation. The chain is D-alanine--D-alanine ligase from Aliivibrio fischeri (strain ATCC 700601 / ES114) (Vibrio fischeri).